Reading from the N-terminus, the 142-residue chain is Universal stress protein G (142 aa).

This sequence belongs to the universal stress protein A family.

This is Universal stress protein G (uspG) from Escherichia coli O157:H7.